We begin with the raw amino-acid sequence, 367 residues long: tRNA-specific 2-thiouridylase MnmA (367 aa).

ATP contacts are provided by residues 12 to 19 and Met38; that span reads GMSGGVDS. The segment at 98–100 is interaction with target base in tRNA; it reads NPD. The active-site Nucleophile is Cys103. A disulfide bond links Cys103 and Cys200. Residue Gly128 coordinates ATP. The interval 150–152 is interaction with tRNA; sequence KDQ. Cys200 acts as the Cysteine persulfide intermediate in catalysis. An interaction with tRNA region spans residues 312-313; the sequence is RY.

The protein belongs to the MnmA/TRMU family. Interacts with TusE.

Its subcellular location is the cytoplasm. It carries out the reaction S-sulfanyl-L-cysteinyl-[protein] + uridine(34) in tRNA + AH2 + ATP = 2-thiouridine(34) in tRNA + L-cysteinyl-[protein] + A + AMP + diphosphate + H(+). Its function is as follows. Catalyzes the 2-thiolation of uridine at the wobble position (U34) of tRNA(Lys), tRNA(Glu) and tRNA(Gln), leading to the formation of s(2)U34, the first step of tRNA-mnm(5)s(2)U34 synthesis. Sulfur is provided by IscS, via a sulfur-relay system. Binds ATP and its substrate tRNAs. The polypeptide is tRNA-specific 2-thiouridylase MnmA (Blochmanniella pennsylvanica (strain BPEN)).